Consider the following 58-residue polypeptide: Bestoxin (58 aa).

The LCN-type CS-alpha/beta domain occupies 3–58 (VPGNYPLDKDGNTYTCLELGENKDCQKVCKLHGVQYGYCYAFSCWCKEYLDDKDSV). Disulfide bonds link cysteine 18/cysteine 41, cysteine 27/cysteine 46, and cysteine 31/cysteine 48.

Expressed by the venom gland.

It is found in the secreted. Its function is as follows. Beta toxins bind voltage-independently at site-4 of sodium channels (Nav) and shift the voltage of activation toward more negative potentials thereby affecting sodium channel activation and promoting spontaneous and repetitive firing. In mice, causes intense writhing. The chain is Bestoxin from Parabuthus transvaalicus (Transvaal thick-tailed scorpion).